The chain runs to 357 residues: Phosphoribosylformylglycinamidine cyclo-ligase (357 aa).

This sequence belongs to the AIR synthase family.

The protein resides in the cytoplasm. The enzyme catalyses 2-formamido-N(1)-(5-O-phospho-beta-D-ribosyl)acetamidine + ATP = 5-amino-1-(5-phospho-beta-D-ribosyl)imidazole + ADP + phosphate + H(+). It functions in the pathway purine metabolism; IMP biosynthesis via de novo pathway; 5-amino-1-(5-phospho-D-ribosyl)imidazole from N(2)-formyl-N(1)-(5-phospho-D-ribosyl)glycinamide: step 2/2. This chain is Phosphoribosylformylglycinamidine cyclo-ligase, found in Rhizobium johnstonii (strain DSM 114642 / LMG 32736 / 3841) (Rhizobium leguminosarum bv. viciae).